Consider the following 285-residue polypeptide: uncharacterized protein (285 aa).

This is an uncharacterized protein from Borreliella burgdorferi (strain ATCC 35210 / DSM 4680 / CIP 102532 / B31) (Borrelia burgdorferi).